Here is a 699-residue protein sequence, read N- to C-terminus: Polyribonucleotide nucleotidyltransferase (699 aa).

2 residues coordinate Mg(2+): D485 and D491. The 60-residue stretch at 552-611 (PRITVIKINPEKIRDVIGKGGAVIRALTEETGTTIELEDDGTVKIASSNGEATKEAIRRI) folds into the KH domain. One can recognise an S1 motif domain in the interval 621-689 (GRIYNGKVIR…RQGRVRLSIK (69 aa)).

Belongs to the polyribonucleotide nucleotidyltransferase family. As to quaternary structure, component of the RNA degradosome, which is a multiprotein complex involved in RNA processing and mRNA degradation. Requires Mg(2+) as cofactor.

It localises to the cytoplasm. It carries out the reaction RNA(n+1) + phosphate = RNA(n) + a ribonucleoside 5'-diphosphate. In terms of biological role, involved in mRNA degradation. Catalyzes the phosphorolysis of single-stranded polyribonucleotides processively in the 3'- to 5'-direction. The protein is Polyribonucleotide nucleotidyltransferase of Shewanella baltica (strain OS223).